The primary structure comprises 234 residues: Carboxy-S-adenosyl-L-methionine synthase (234 aa).

Residues Tyr-35, Gly-60–Ser-62, Asp-83–Asn-84, and Arg-191 contribute to the S-adenosyl-L-methionine site.

The protein belongs to the class I-like SAM-binding methyltransferase superfamily. Cx-SAM synthase family. Homodimer.

The catalysed reaction is prephenate + S-adenosyl-L-methionine = carboxy-S-adenosyl-L-methionine + 3-phenylpyruvate + H2O. Functionally, catalyzes the conversion of S-adenosyl-L-methionine (SAM) to carboxy-S-adenosyl-L-methionine (Cx-SAM). This chain is Carboxy-S-adenosyl-L-methionine synthase, found in Campylobacter lari (strain RM2100 / D67 / ATCC BAA-1060).